We begin with the raw amino-acid sequence, 154 residues long: Ribonuclease H (154 aa).

The RNase H type-1 domain maps to 5–147 (GKSRVAIYTD…ADMLARGEVE (143 aa)). The Mg(2+) site is built by Asp14, Glu53, Asp75, and Asp139.

The protein belongs to the RNase H family. In terms of assembly, monomer. The cofactor is Mg(2+).

It localises to the cytoplasm. The enzyme catalyses Endonucleolytic cleavage to 5'-phosphomonoester.. In terms of biological role, endonuclease that specifically degrades the RNA of RNA-DNA hybrids. The chain is Ribonuclease H from Anaplasma marginale (strain St. Maries).